A 166-amino-acid chain; its full sequence is uncharacterized protein (166 aa).

The tract at residues 28–55 (SRQVHPPWPVPCKSKLQEQDSSESKESK) is disordered. A compositionally biased stretch (basic and acidic residues) spans 42 to 55 (KLQEQDSSESKESK). Positions 67–163 (QNAMLYIENN…NYTPKQFKRT (97 aa)) constitute an HTH araC/xylS-type domain. 2 DNA-binding regions (H-T-H motif) span residues 84–105 (DTVA…KLAT) and 130–153 (VTET…KKRT).

This is an uncharacterized protein from Pseudoalteromonas carrageenovora (Alteromonas carrageenovora).